We begin with the raw amino-acid sequence, 130 residues long: MIKLRLKRFGKKREASFRLVACNSTSRRDGRPLQELGFYNPRTKETRLDTEAIRERLGQGAQPTDIVRTLLERGGLIEKTVRPSVTVGQAKQTAKREAAAKQAAKDAAEAKAAAAAEAEAPAADAEASEG.

Over residues 98-109 (AAAKQAAKDAAE) the composition is skewed to basic and acidic residues. Residues 98–130 (AAAKQAAKDAAEAKAAAAAEAEAPAADAEASEG) are disordered. Residues 110–130 (AKAAAAAEAEAPAADAEASEG) show a composition bias toward low complexity.

It belongs to the bacterial ribosomal protein bS16 family.

This Synechococcus sp. (strain CC9902) protein is Small ribosomal subunit protein bS16.